Here is a 160-residue protein sequence, read N- to C-terminus: uncharacterized protein (160 aa).

Positions 1 to 25 (MKVTLLLLLIAVLLLLLIFMKVCKQ) are cleaved as a signal peptide.

This is an uncharacterized protein from Invertebrate iridescent virus 6 (IIV-6).